A 273-amino-acid polypeptide reads, in one-letter code: Zinc finger protein 32 (273 aa).

3 C2H2-type zinc fingers span residues 77–99 (YECQ…ERIH), 105–127 (FECT…QRIH), and 133–155 (YQCK…ERLH). Cys-79, Cys-82, His-95, His-99, Cys-107, Cys-110, His-123, His-127, Ser-141, Gln-144, Gly-157, Tyr-161, Phe-198, Lys-201, Leu-214, Ala-218, Cys-247, Cys-250, His-263, and Cys-267 together coordinate Zn(2+). 2 consecutive C2H2-type zinc fingers follow at residues 161–183 (YECA…RRVH) and 189–211 (YRCD…IRVH). A C2H2-type 6 zinc finger spans residues 217-239 (YACTQCRKSFHTRGNCILHGKIH). A CCHC-type zinc finger spans residues 245–267 (YLCGQCGKSFTQRGSLAVHQRSC).

The protein belongs to the krueppel C2H2-type zinc-finger protein family.

The protein localises to the nucleus. Functionally, may be involved in transcriptional regulation. The sequence is that of Zinc finger protein 32 (ZNF32) from Homo sapiens (Human).